The following is a 637-amino-acid chain: Chaperone protein HtpG (637 aa).

Residues 1 to 345 (MSHQETHGFQ…SNDLPLNVSR (345 aa)) form an a; substrate-binding region. Residues 346-562 (EILQDNKVTR…EGEMSSQMIK (217 aa)) form a b region. Residues 563–637 (LMQAAGQPVP…VNQMLLKSVG (75 aa)) form a c region.

Belongs to the heat shock protein 90 family. In terms of assembly, homodimer.

The protein localises to the cytoplasm. Molecular chaperone. Has ATPase activity. This Shewanella amazonensis (strain ATCC BAA-1098 / SB2B) protein is Chaperone protein HtpG.